Consider the following 692-residue polypeptide: Elongation factor G (692 aa).

The tr-type G domain maps to Lys-8–Leu-282. Residues Ala-17–Thr-24, Asp-81–His-85, and Asn-135–Asp-138 contribute to the GTP site.

Belongs to the TRAFAC class translation factor GTPase superfamily. Classic translation factor GTPase family. EF-G/EF-2 subfamily.

Its subcellular location is the cytoplasm. Its function is as follows. Catalyzes the GTP-dependent ribosomal translocation step during translation elongation. During this step, the ribosome changes from the pre-translocational (PRE) to the post-translocational (POST) state as the newly formed A-site-bound peptidyl-tRNA and P-site-bound deacylated tRNA move to the P and E sites, respectively. Catalyzes the coordinated movement of the two tRNA molecules, the mRNA and conformational changes in the ribosome. The polypeptide is Elongation factor G (fusA) (Mycoplasmopsis pulmonis (strain UAB CTIP) (Mycoplasma pulmonis)).